Here is a 221-residue protein sequence, read N- to C-terminus: Serine/arginine-rich splicing factor 2 (221 aa).

Ser-2 bears the N-acetylserine mark. Phosphoserine is present on Ser-2. The 79-residue stretch at 14–92 folds into the RRM domain; the sequence is TSLKVDNLTY…RELRVQMARY (79 aa). 2 positions are modified to phosphothreonine: Thr-22 and Thr-25. At Ser-26 the chain carries Phosphoserine. Residue Lys-52 is modified to N6-acetyllysine. Positions 92–221 are disordered; sequence YGRPPDSHHS…SPEEEGAVSS (130 aa). Composition is skewed to basic residues over residues 117–171 and 179–189; these read RRSR…RSKS and SRSRSRSRSRS. Phosphoserine occurs at positions 189, 191, 204, 206, 208, 212, and 220.

This sequence belongs to the splicing factor SR family. Interacts with CCNL1 and CCNL2. Interacts with SCAF11. Interacts with ZRSR2/U2AF1-RS2. Interacts with CCDC55 (via C-terminus). In vitro, self-associates and binds SRSF1/SFRS1 (ASF/SF2), SNRNP70 and U2AF1 but not U2AF2. Binds SREK1/SFRS12. Interacts with BRDT. Extensively phosphorylated on serine residues in the RS domain. Phosphorylated by SRPK2 and this causes its redistribution from the nuclear speckle to nucleoplasm and controls cell fate decision in response to cisplatin treatment. KAT5/TIP60 inhibits its phosphorylation by preventing SRPK2 nuclear translocation. In terms of processing, acetylation on Lys-52 by KAT5/TIP60 promotes its proteasomal degradation. This effect is counterbalanced by HDAC6, which positively controls SRSF2 protein level by deacetylating it and preventing its proteasomal degradation. Expressed in all the tissues examined; liver, kidney, spleen, heart, lung and brain.

Its subcellular location is the nucleus. The protein localises to the nucleoplasm. It localises to the nucleus speckle. Functionally, necessary for the splicing of pre-mRNA. It is required for formation of the earliest ATP-dependent splicing complex and interacts with spliceosomal components bound to both the 5'- and 3'-splice sites during spliceosome assembly. It also is required for ATP-dependent interactions of both U1 and U2 snRNPs with pre-mRNA. Can bind to the myelin basic protein (MBP) gene MB3 regulatory region and increase transcription of the mbp promoter in cells derived from the CNS. The phosphorylated form (by SRPK2) is required for cellular apoptosis in response to cisplatin treatment. The chain is Serine/arginine-rich splicing factor 2 (Srsf2) from Mus musculus (Mouse).